A 741-amino-acid polypeptide reads, in one-letter code: Homeobox protein AHox1 (741 aa).

7 disordered regions span residues 1-30 (MEKM…KSSS), 61-96 (KRRL…NFCR), 146-183 (VNPL…KSCC), 203-226 (ADSD…INQD), 357-383 (KTEE…PIRT), 476-501 (FDFP…NPQT), and 616-642 (QYGH…GTVK). Positions 7-19 (KSVSPVPFNNSNN) are enriched in low complexity. Positions 63–78 (RLLDPQNKKKQNRFER) are enriched in basic and acidic residues. The span at 79–92 (YSSSNHAQEQSSEE) shows a compositional bias: polar residues. The segment covering 169-181 (SFSSSSEASDSKS) has biased composition (low complexity). Residues 363-375 (RSPSETKQYSPDA) show a composition bias toward polar residues. Over residues 616–629 (QYGHMSSSQNPHSE) the composition is skewed to polar residues. Positions 630-639 (TQNRSEEVRG) are enriched in basic and acidic residues. Positions 645–704 (RKWNRAVFSLMQRRGLEKSFQSQKYVAKPERRKLADALSLTDAQVKIWFQNRRMKWRQEI) form a DNA-binding region, homeobox. The segment at 722–741 (EIEKEKTQTPSDEGEVINVD) is disordered.

This sequence belongs to the H2.0 homeobox family. In terms of tissue distribution, expressed in the tissues of endodermal origin.

The protein localises to the nucleus. The protein is Homeobox protein AHox1 (AHOX1) of Halocynthia roretzi (Sea squirt).